We begin with the raw amino-acid sequence, 290 residues long: ATP synthase gamma chain (290 aa).

Belongs to the ATPase gamma chain family. As to quaternary structure, F-type ATPases have 2 components, CF(1) - the catalytic core - and CF(0) - the membrane proton channel. CF(1) has five subunits: alpha(3), beta(3), gamma(1), delta(1), epsilon(1). CF(0) has three main subunits: a, b and c.

Its subcellular location is the cell inner membrane. Produces ATP from ADP in the presence of a proton gradient across the membrane. The gamma chain is believed to be important in regulating ATPase activity and the flow of protons through the CF(0) complex. In Bradyrhizobium diazoefficiens (strain JCM 10833 / BCRC 13528 / IAM 13628 / NBRC 14792 / USDA 110), this protein is ATP synthase gamma chain.